The primary structure comprises 303 residues: Pyridoxal 5'-phosphate synthase subunit PdxS (303 aa).

D33 is a D-ribose 5-phosphate binding site. Residue K90 is the Schiff-base intermediate with D-ribose 5-phosphate of the active site. G162 is a binding site for D-ribose 5-phosphate. R174 provides a ligand contact to D-glyceraldehyde 3-phosphate. D-ribose 5-phosphate is bound by residues G223 and 244 to 245 (GS).

Belongs to the PdxS/SNZ family. In the presence of PdxT, forms a dodecamer of heterodimers.

The enzyme catalyses aldehydo-D-ribose 5-phosphate + D-glyceraldehyde 3-phosphate + L-glutamine = pyridoxal 5'-phosphate + L-glutamate + phosphate + 3 H2O + H(+). Its pathway is cofactor biosynthesis; pyridoxal 5'-phosphate biosynthesis. In terms of biological role, catalyzes the formation of pyridoxal 5'-phosphate from ribose 5-phosphate (RBP), glyceraldehyde 3-phosphate (G3P) and ammonia. The ammonia is provided by the PdxT subunit. Can also use ribulose 5-phosphate and dihydroxyacetone phosphate as substrates, resulting from enzyme-catalyzed isomerization of RBP and G3P, respectively. The sequence is that of Pyridoxal 5'-phosphate synthase subunit PdxS from Mycobacterium avium (strain 104).